A 340-amino-acid polypeptide reads, in one-letter code: Glucokinase (340 aa).

17–22 (GDIGGT) is a binding site for ATP.

Belongs to the bacterial glucokinase family.

Its subcellular location is the cytoplasm. The catalysed reaction is D-glucose + ATP = D-glucose 6-phosphate + ADP + H(+). The chain is Glucokinase from Agrobacterium fabrum (strain C58 / ATCC 33970) (Agrobacterium tumefaciens (strain C58)).